Consider the following 457-residue polypeptide: Siroheme synthase (457 aa).

The segment at M1–T204 is precorrin-2 dehydrogenase /sirohydrochlorin ferrochelatase. Residues D22–V23 and L43–T44 each bind NAD(+). Residue S128 is modified to Phosphoserine. Residues G216–Y457 are uroporphyrinogen-III C-methyltransferase. Residue P225 coordinates S-adenosyl-L-methionine. D248 functions as the Proton acceptor in the catalytic mechanism. K270 functions as the Proton donor in the catalytic mechanism. Residues G301 to D303, I306, T331 to A332, M382, and G411 contribute to the S-adenosyl-L-methionine site.

This sequence in the N-terminal section; belongs to the precorrin-2 dehydrogenase / sirohydrochlorin ferrochelatase family. The protein in the C-terminal section; belongs to the precorrin methyltransferase family.

The catalysed reaction is uroporphyrinogen III + 2 S-adenosyl-L-methionine = precorrin-2 + 2 S-adenosyl-L-homocysteine + H(+). The enzyme catalyses precorrin-2 + NAD(+) = sirohydrochlorin + NADH + 2 H(+). It carries out the reaction siroheme + 2 H(+) = sirohydrochlorin + Fe(2+). The protein operates within cofactor biosynthesis; adenosylcobalamin biosynthesis; precorrin-2 from uroporphyrinogen III: step 1/1. Its pathway is cofactor biosynthesis; adenosylcobalamin biosynthesis; sirohydrochlorin from precorrin-2: step 1/1. It participates in porphyrin-containing compound metabolism; siroheme biosynthesis; precorrin-2 from uroporphyrinogen III: step 1/1. It functions in the pathway porphyrin-containing compound metabolism; siroheme biosynthesis; siroheme from sirohydrochlorin: step 1/1. The protein operates within porphyrin-containing compound metabolism; siroheme biosynthesis; sirohydrochlorin from precorrin-2: step 1/1. In terms of biological role, multifunctional enzyme that catalyzes the SAM-dependent methylations of uroporphyrinogen III at position C-2 and C-7 to form precorrin-2 via precorrin-1. Then it catalyzes the NAD-dependent ring dehydrogenation of precorrin-2 to yield sirohydrochlorin. Finally, it catalyzes the ferrochelation of sirohydrochlorin to yield siroheme. The protein is Siroheme synthase of Salmonella dublin (strain CT_02021853).